Reading from the N-terminus, the 106-residue chain is Molt-inhibiting hormone (106 aa).

Positions 1–29 (MVNQVAQCFTVRRVWLVVVVGLLVHQTTA) are cleaved as a signal peptide. Disulfide bonds link C36–C73, C53–C69, and C56–C82. A104 is subject to Alanine amide. The propeptide occupies 105–106 (GR).

As to expression, sinus gland of the eyestalk.

The protein localises to the secreted. Inhibits Y-organs where molting hormone (ecdysteroid) is secreted. A molting cycle is initiated when MIH secretion diminishes or stops. The protein is Molt-inhibiting hormone of Faxonius limosus (Spinycheek crayfish).